The following is a 2062-amino-acid chain: Ankyrin repeat domain-containing protein 12 (2062 aa).

2 disordered regions span residues 1 to 119 and 145 to 188; these read MPKS…GNKK and ARDN…GETP. Over residues 9 to 20 the composition is skewed to polar residues; it reads PIQSENSDSDSN. Basic and acidic residues-rich tracts occupy residues 41-57 and 100-117; these read PKIE…EKSS and YSEK…EAGN. Positions 145-172 are enriched in polar residues; the sequence is ARDNSPDSTPNHPSQTTPAQKKTPSSSS. Position 149 is a phosphoserine (S149). Residues 173-187 are compositionally biased toward basic and acidic residues; it reads RQKDKVNKRNERGET. ANK repeat units follow at residues 184–213, 217–246, and 250–280; these read RGET…NVNV, AGWT…DVNT, and DDDT…PFQA. 8 disordered regions span residues 301-338, 409-501, 538-577, 609-683, 727-788, 812-1073, 1097-1227, and 1328-1350; these read KREV…TEKD, KSFK…TRIT, ISTG…MSLQ, QKDF…DSAK, EKNI…FTSL, EKHI…LVND, KHKE…RPPV, and EESN…KPEV. Residues 306-318 show a composition bias toward acidic residues; it reads LSDDDESYTDSEE. 2 stretches are compositionally biased toward polar residues: residues 319 to 328 and 437 to 454; these read AQSVNPSSVD and KKIS…NSDM. Basic and acidic residues predominate over residues 455–467; sequence QTKKEYVVSGEHK. Residues 468–480 are compositionally biased toward basic residues; that stretch reads QKGKVKRKLKNQN. The segment covering 481 to 498 has biased composition (basic and acidic residues); sequence KNKENQELKQEKEGKENT. Residue S543 is modified to Phosphoserine. The span at 565-575 shows a compositional bias: polar residues; sequence TCLSPGSSEMS. 8 stretches are compositionally biased toward basic and acidic residues: residues 609-631, 639-649, 658-683, 727-784, 812-969, 977-1037, 1061-1072, and 1103-1157; these read QKDF…DHSP, TLKKMDKEGKT, KERE…DSAK, EKNI…KDSE, EKHI…DKES, HIQE…KDKI, KDTRPKEKRLVN, and KQKE…KQPK. S630 bears the Phosphoserine mark. S861 is subject to Phosphoserine. Polar residues predominate over residues 1161-1189; the sequence is SNRSQSVDTKNVMTLGKSSFVSDNSLNRS. Positions 1200–1213 are enriched in low complexity; sequence SSRSVSMISVASSE. Over residues 1328-1344 the composition is skewed to polar residues; sequence EESNQGSLLTVPGDTSP. S1401 bears the Phosphoserine mark. Disordered stretches follow at residues 1721–1744 and 1756–1795; these read NAED…NTMA and LLSE…VPQP. Positions 1729-1744 are enriched in polar residues; it reads NQIPQRMTRNKANTMA.

Interacts with the PAS region of the p160 coactivators.

It localises to the nucleus. Functionally, may recruit HDACs to the p160 coactivators/nuclear receptor complex to inhibit ligand-dependent transactivation. This Homo sapiens (Human) protein is Ankyrin repeat domain-containing protein 12 (ANKRD12).